Here is a 504-residue protein sequence, read N- to C-terminus: Catalase (504 aa).

A signal peptide spans 1–21; sequence MQMSKSFLLITVGLASTSLQA. Catalysis depends on residues His72 and Asn145. Heme is bound at residue Tyr353.

This sequence belongs to the catalase family. Requires heme as cofactor.

The protein localises to the periplasm. The catalysed reaction is 2 H2O2 = O2 + 2 H2O. Decomposes hydrogen peroxide into water and oxygen; serves to protect cells from the toxic effects of hydrogen peroxide. The sequence is that of Catalase from Vibrio parahaemolyticus serotype O3:K6 (strain RIMD 2210633).